A 313-amino-acid chain; its full sequence is Probable cell division protein WhiA (313 aa).

A DNA-binding region (H-T-H motif) is located at residues 280–313; it reads SLKELGAMLNPPIGKSGVNHRLKKLCSIADGLRQ.

This sequence belongs to the WhiA family.

Its function is as follows. Involved in cell division and chromosome segregation. The polypeptide is Probable cell division protein WhiA (Lachnoclostridium phytofermentans (strain ATCC 700394 / DSM 18823 / ISDg) (Clostridium phytofermentans)).